Consider the following 235-residue polypeptide: Phosphoribosylaminoimidazole-succinocarboxamide synthase (235 aa).

The protein belongs to the SAICAR synthetase family.

The catalysed reaction is 5-amino-1-(5-phospho-D-ribosyl)imidazole-4-carboxylate + L-aspartate + ATP = (2S)-2-[5-amino-1-(5-phospho-beta-D-ribosyl)imidazole-4-carboxamido]succinate + ADP + phosphate + 2 H(+). The protein operates within purine metabolism; IMP biosynthesis via de novo pathway; 5-amino-1-(5-phospho-D-ribosyl)imidazole-4-carboxamide from 5-amino-1-(5-phospho-D-ribosyl)imidazole-4-carboxylate: step 1/2. The sequence is that of Phosphoribosylaminoimidazole-succinocarboxamide synthase from Streptococcus thermophilus (strain ATCC BAA-491 / LMD-9).